Reading from the N-terminus, the 264-residue chain is Glucosamine-6-phosphate deaminase (264 aa).

D67 acts as the Proton acceptor; for enolization step in catalysis. Catalysis depends on N136, which acts as the For ring-opening step. The active-site Proton acceptor; for ring-opening step is H138. The active-site For ring-opening step is the E143.

The protein belongs to the glucosamine/galactosamine-6-phosphate isomerase family. NagB subfamily. Homohexamer.

It catalyses the reaction alpha-D-glucosamine 6-phosphate + H2O = beta-D-fructose 6-phosphate + NH4(+). Its pathway is amino-sugar metabolism; N-acetylneuraminate degradation; D-fructose 6-phosphate from N-acetylneuraminate: step 5/5. In terms of biological role, catalyzes the reversible isomerization-deamination of glucosamine 6-phosphate (GlcN6P) to form fructose 6-phosphate (Fru6P) and ammonium ion. This is Glucosamine-6-phosphate deaminase from Shewanella woodyi (strain ATCC 51908 / MS32).